Reading from the N-terminus, the 111-residue chain is Large ribosomal subunit protein uL23 (111 aa).

The protein belongs to the universal ribosomal protein uL23 family. In terms of assembly, part of the 50S ribosomal subunit. Contacts protein L29, and trigger factor when it is bound to the ribosome.

Functionally, one of the early assembly proteins it binds 23S rRNA. One of the proteins that surrounds the polypeptide exit tunnel on the outside of the ribosome. Forms the main docking site for trigger factor binding to the ribosome. In Chlamydia felis (strain Fe/C-56) (Chlamydophila felis), this protein is Large ribosomal subunit protein uL23.